The primary structure comprises 1088 residues: Extended synaptotagmin-1 (1088 aa).

N-acetylmethionine is present on Met1. The Cytoplasmic segment spans residues 1 to 30; sequence MERSPEEGAGPEPSGQSPATDSTRERDGGS. The interval 1 to 38 is disordered; sequence MERSPEEGAGPEPSGQSPATDSTRERDGGSGVPPAGPG. Residues 31 to 51 traverse the membrane as a helical segment; the sequence is GVPPAGPGAASEALAVLTSFG. At 52-54 the chain is on the lumenal side; the sequence is RRL. A helical transmembrane segment spans residues 55-75; sequence LVLVPVYLAGAAGLSVGFVLF. At 76 to 1088 the chain is on the cytoplasmic side; it reads GLALYLGWRR…LIDDRDKGGS (1013 aa). The region spanning 127-305 is the SMP-LTD domain; it reads DVEKAEWLNK…LPNRLLVPLV (179 aa). C2 domains are found at residues 304–425, 446–572, 618–740, and 771–888; these read LVPD…DNWY, DAEK…QLSS, DAPP…DEWL, and QVNS…ALSG. Phosphoserine; by CDK5 is present on Ser316. 8 residues coordinate Ca(2+): Lys336, Asp337, Asp349, Asp396, Asp398, Asp400, Asp402, and Asp403. Positions 599-630 are disordered; it reads TEPGAQDWDSESPETGSSVDAPPRPYHTTPNS. The residue at position 806 (Lys806) is an N6-acetyllysine. Ser809 bears the Phosphoserine mark. Positions 911-930 are disordered; that stretch reads HSHSSSSLNEEPEVLGDPTH. 2 positions are modified to phosphoserine: Ser933 and Ser947. The 123-residue stretch at 955–1077 folds into the C2 5 domain; sequence PLGQVKLTVW…DLSQGAAQWY (123 aa). A Phosphotyrosine modification is found at Tyr993. The segment at 1002–1009 is required for phosphatidylinositol 4,5-bisphosphate-dependent location at the cell membrane; that stretch reads KNRGTKRK.

Belongs to the extended synaptotagmin family. In terms of assembly, interacts with ESYT2 and ESYT3. Interacts with ADGRD1; inhibiting the G-protein-coupled receptor activity of ADGRD1. Interaction with ADGRD1 is abolished when cytosolic calcium increases, relieving ADGRD1 G-protein-coupled receptor activity. Interacts (phosphorylated form) with SLC2A4. Post-translationally, phosphorylated on Ser residues in insulin-treated adipocytes (in vitro); this promotes interaction with SLC2A4. In terms of tissue distribution, ubiquitously expressed with a higher expression in spleen and white adipose tissue.

It localises to the endoplasmic reticulum membrane. The protein localises to the cell membrane. Functionally, binds calcium (via the C2 domains) and translocates to sites of contact between the endoplasmic reticulum and the cell membrane in response to increased cytosolic calcium levels. Helps tether the endoplasmic reticulum to the cell membrane and promotes the formation of appositions between the endoplasmic reticulum and the cell membrane. Acts as an inhibitor of ADGRD1 G-protein-coupled receptor activity in absence of cytosolic calcium. Binds glycerophospholipids in a barrel-like domain and may play a role in cellular lipid transport. This Rattus norvegicus (Rat) protein is Extended synaptotagmin-1 (Esyt1).